A 1411-amino-acid polypeptide reads, in one-letter code: DNA-directed RNA polymerase subunit beta' (1411 aa).

Residues Cys-69, Cys-71, Cys-84, and Cys-87 each contribute to the Zn(2+) site. Positions 461, 463, and 465 each coordinate Mg(2+). Positions 809, 883, 890, and 893 each coordinate Zn(2+).

This sequence belongs to the RNA polymerase beta' chain family. As to quaternary structure, the RNAP catalytic core consists of 2 alpha, 1 beta, 1 beta' and 1 omega subunit. When a sigma factor is associated with the core the holoenzyme is formed, which can initiate transcription. It depends on Mg(2+) as a cofactor. Zn(2+) is required as a cofactor.

It carries out the reaction RNA(n) + a ribonucleoside 5'-triphosphate = RNA(n+1) + diphosphate. DNA-dependent RNA polymerase catalyzes the transcription of DNA into RNA using the four ribonucleoside triphosphates as substrates. This chain is DNA-directed RNA polymerase subunit beta', found in Ehrlichia ruminantium (strain Gardel).